The following is a 148-amino-acid chain: Deoxyuridine 5'-triphosphate nucleotidohydrolase (148 aa).

Residues 68–70, Asn-81, 85–87, and Lys-95 contribute to the substrate site; these read RSG and TID.

Belongs to the dUTPase family. It depends on Mg(2+) as a cofactor.

The enzyme catalyses dUTP + H2O = dUMP + diphosphate + H(+). It functions in the pathway pyrimidine metabolism; dUMP biosynthesis; dUMP from dCTP (dUTP route): step 2/2. Functionally, this enzyme is involved in nucleotide metabolism: it produces dUMP, the immediate precursor of thymidine nucleotides and it decreases the intracellular concentration of dUTP so that uracil cannot be incorporated into DNA. In Rickettsia canadensis (strain McKiel), this protein is Deoxyuridine 5'-triphosphate nucleotidohydrolase.